The primary structure comprises 451 residues: POC1 centriolar protein homolog B (451 aa).

WD repeat units lie at residues 16 to 55, 58 to 99, 101 to 139, 142 to 181, 183 to 223, 226 to 265, and 268 to 307; these read GHKA…RAYR, GHKD…SEFK, HTAP…FLYS, RHTH…CVNN, SDSV…LLQH, VHSG…LIYT, and GHTG…LHCK. Ser-321 bears the Phosphoserine mark. A disordered region spans residues 372–394; it reads PECSPTTTKKKTEDMSDLPSESQ. Positions 404–443 form a coiled coil; the sequence is ALEHIMEQLNVLTQTVSILEQRLTLTEDKLKDCLENQQKL.

It belongs to the WD repeat POC1 family. As to quaternary structure, interacts with POC1A. Interacts with FAM161A. Interacts with CEP44; the interaction is direct and recruits POC1B to centriolar microtubules. Forms a microtubule-associated complex with POC5, CETN2 and FAM161A. Interacts with CCDC15. Post-translationally, phosphorylated in mitotic cells that may be mediated by CDK1.

The protein localises to the cytoplasm. The protein resides in the cytoskeleton. It localises to the microtubule organizing center. Its subcellular location is the centrosome. It is found in the centriole. The protein localises to the cilium basal body. The protein resides in the spindle pole. Functionally, plays an important role in centriole assembly and/or stability and ciliogenesis. Involved in early steps of centriole duplication, as well as in the later steps of centriole length control. Acts in concert with POC1A to ensure centriole integrity and proper mitotic spindle formation. Required for primary cilia formation, ciliary length and also cell proliferation. Required for retinal integrity. Acts as a positive regulator of centriole elongation. The sequence is that of POC1 centriolar protein homolog B (POC1B) from Pongo abelii (Sumatran orangutan).